The primary structure comprises 455 residues: GTPase Der (455 aa).

2 consecutive EngA-type G domains span residues 4–169 (PVVA…PPKD) and 178–353 (IQMS…EQHR). Residues 10 to 17 (GRPNVGKS), 57 to 61 (DTGGL), 120 to 123 (NKCE), 184 to 191 (GRPNVGKS), 231 to 235 (DTAGI), and 296 to 299 (NKWD) each bind GTP. Residues 354–439 (RRVTTSVVNE…PLKLFWRGKQ (86 aa)) form the KH-like domain.

Belongs to the TRAFAC class TrmE-Era-EngA-EngB-Septin-like GTPase superfamily. EngA (Der) GTPase family. As to quaternary structure, associates with the 50S ribosomal subunit.

Its function is as follows. GTPase that plays an essential role in the late steps of ribosome biogenesis. This chain is GTPase Der, found in Synechococcus sp. (strain CC9902).